We begin with the raw amino-acid sequence, 1108 residues long: cGMP-inhibited 3',5'-cyclic phosphodiesterase 3B (1108 aa).

Basic and acidic residues predominate over residues 1–11 (MRKDERERDTP). Positions 1 to 32 (MRKDERERDTPAMRSPPPPPPPATATAASPPE) are disordered. The tract at residues 1 to 32 (MRKDERERDTPAMRSPPPPPPPATATAASPPE) is interaction with RAPGEF3. The segment covering 14-23 (RSPPPPPPPA) has biased composition (pro residues). Serine 15 is modified (phosphoserine). 6 helical membrane-spanning segments follow: residues 73–93 (AGAR…LLGA), 114–134 (LSLS…CFLT), 144–164 (AGSW…FAAW), 175–195 (AAAA…LTLA), 204–224 (VLVL…LGAL), and 231–251 (LLSC…DHFF). Serine 279 carries the post-translational modification Phosphoserine; by PKB/AKT1 or PKB/AKT2. A phosphoserine mark is found at serine 280 and serine 427. The segment at 405 to 448 (DRKLHKGLSSKPSFPTAQLRRSSGASGLLTSEHHSRWDRSGGKR) is disordered. The span at 414 to 433 (SKPSFPTAQLRRSSGASGLL) shows a compositional bias: polar residues. Residues 421-445 (AQLRRSSGASGLLTSEHHSRWDRSG) form an interaction with PIK3R6 region. The segment covering 435-445 (SEHHSRWDRSG) has biased composition (basic and acidic residues). The 438-residue stretch at 633 to 1070 (PNIDQEVLLD…KIWKEIIEEE (438 aa)) folds into the PDEase domain. The active-site Proton donor is histidine 719. Histidine 719 contacts AMP. Residues histidine 723, histidine 803, aspartate 804, and aspartate 919 each coordinate Mg(2+). AMP is bound by residues aspartate 804, aspartate 919, and glutamine 970. A compositionally biased stretch (acidic residues) spans 999–1033 (EEGDDTESDDDDDDDDDDDDDDDEELDSDDEETED). The segment at 999-1042 (EEGDDTESDDDDDDDDDDDDDDDEELDSDDEETEDNLNPKPQRR) is disordered.

This sequence belongs to the cyclic nucleotide phosphodiesterase family. PDE3 subfamily. In terms of assembly, homodimer. Interacts with PIK3CG; regulates PDE3B activity and thereby cAMP levels in cells. Interacts with RAPGEF3 and PIK3R6; form a signaling complex that regulates phosphatidylinositol 3-kinase gamma in angiogenesis. Interacts with ABHD15; this interaction regulates PDE3B's stability and expression and, thereby, impacts the antilipolytic action of insulin. The cofactor is Mg(2+). Requires Mn(2+) as cofactor. In terms of processing, phosphorylation at Ser-279 mediates insulin-induced activation of PDE3B. In terms of tissue distribution, abundant in adipose tissues.

It is found in the membrane. It catalyses the reaction a nucleoside 3',5'-cyclic phosphate + H2O = a nucleoside 5'-phosphate + H(+). The catalysed reaction is 3',5'-cyclic AMP + H2O = AMP + H(+). It carries out the reaction 3',5'-cyclic GMP + H2O = GMP + H(+). With respect to regulation, inhibited by cGMP. Cyclic nucleotide phosphodiesterase with a dual-specificity for the second messengers cAMP and cGMP, which are key regulators of many important physiological processes. Regulates angiogenesis by inhibiting the cAMP-dependent guanine nucleotide exchange factor RAPGEF3 and downstream phosphatidylinositol 3-kinase gamma-mediated signaling. Controls cardiac contractility by reducing cAMP concentration in cardiocytes. This chain is cGMP-inhibited 3',5'-cyclic phosphodiesterase 3B, found in Rattus norvegicus (Rat).